We begin with the raw amino-acid sequence, 545 residues long: T-complex protein 1 subunit alpha (545 aa).

The protein belongs to the TCP-1 chaperonin family. Heterooligomeric complex of about 850 to 900 kDa that forms two stacked rings, 12 to 16 nm in diameter.

The protein resides in the cytoplasm. Its function is as follows. Molecular chaperone; assists the folding of proteins upon ATP hydrolysis. Known to play a role, in vitro, in the folding of actin and tubulin. The sequence is that of T-complex protein 1 subunit alpha (TCP-1A) from Schistosoma mansoni (Blood fluke).